Here is a 489-residue protein sequence, read N- to C-terminus: Rhamnulokinase (489 aa).

13 to 17 (ASSGR) is an ATP binding site. C68 and C222 are disulfide-bonded. Residues G83 and 236 to 238 (HDT) each bind substrate. D237 (proton acceptor) is an active-site residue. T259 lines the ATP pocket. N296 contacts substrate. Q304 provides a ligand contact to ATP. C353 and C370 are oxidised to a cystine. G402 contributes to the ATP binding site. C413 and C417 are disulfide-bonded.

The protein belongs to the rhamnulokinase family. It depends on Mg(2+) as a cofactor.

It carries out the reaction L-rhamnulose + ATP = L-rhamnulose 1-phosphate + ADP + H(+). Its pathway is carbohydrate degradation; L-rhamnose degradation; glycerone phosphate from L-rhamnose: step 2/3. Involved in the catabolism of L-rhamnose (6-deoxy-L-mannose). Catalyzes the transfer of the gamma-phosphate group from ATP to the 1-hydroxyl group of L-rhamnulose to yield L-rhamnulose 1-phosphate. The sequence is that of Rhamnulokinase from Salmonella dublin (strain CT_02021853).